The following is a 307-amino-acid chain: Taste receptor type 2 member 106 (307 aa).

At 1–7 (MLTIPEG) the chain is on the extracellular side. The helical transmembrane segment at 8 to 28 (ILLCFITSGSVLGVLGNGFIL) threads the bilayer. Topologically, residues 29–41 (HVNCTDCVRQKFS) are cytoplasmic. The chain crosses the membrane as a helical span at residues 42-62 (TTGFIFTGLAISRICVICIII). At 63–81 (SDGYLKLFSPHMVASDAHI) the chain is on the extracellular side. A helical transmembrane segment spans residues 82–104 (IGISYLWIITNHTSTCFATILNL). The Cytoplasmic segment spans residues 105–124 (FYFLKIANFSHYIFFCLKRK). The helical transmembrane segment at 125 to 145 (LNTIFIFLLGCLFISWSVAFP) threads the bilayer. Over 146–179 (QTVKIFNDKMKHRNTSWKFHLHKSKFIINHILLN) the chain is Extracellular. N159 is a glycosylation site (N-linked (GlcNAc...) asparagine). The chain crosses the membrane as a helical span at residues 180–200 (LGVIFFCMVAIITSFLLIISL). The Cytoplasmic portion of the chain corresponds to 201-227 (WKHNRKMQLYVSRFKSLNTEVHLKVMK). Residues 228 to 248 (VLISFIILLILHVIGILIETL) traverse the membrane as a helical segment. At 249–257 (SFLRYENKL) the chain is on the extracellular side. The helical transmembrane segment at 258–278 (LLILGLNFSSMYPCCHSFILI) threads the bilayer. At 279 to 307 (LANNQLKQASLKALKQFKCHKKDKDVRET) the chain is on the cytoplasmic side.

Belongs to the G-protein coupled receptor T2R family.

The protein localises to the membrane. In terms of biological role, putative taste receptor which may play a role in the perception of bitterness. The protein is Taste receptor type 2 member 106 of Rattus norvegicus (Rat).